We begin with the raw amino-acid sequence, 275 residues long: Putative Ig-like V-type domain-containing protein FPV055 (275 aa).

2 Ig-like V-type domains span residues 25 to 122 (KTFV…MNLG) and 140 to 239 (PRRS…KSLS).

The protein is Putative Ig-like V-type domain-containing protein FPV055 of Fowlpox virus (strain NVSL) (FPV).